An 892-amino-acid polypeptide reads, in one-letter code: Transposase for transposon Tn4556 (892 aa).

Positions 1 to 12 (MGGRAGLDDGRG) are enriched in basic and acidic residues. The disordered stretch occupies residues 1-63 (MGGRAGLDDG…GQPARDAEHR (63 aa)). Over residues 23 to 34 (VAEGAAGAAAWG) the composition is skewed to low complexity.

The protein belongs to the transposase 7 family.

Required for transposition of transposon Tn4556. The sequence is that of Transposase for transposon Tn4556 (tnpA) from Streptomyces fradiae (Streptomyces roseoflavus).